A 224-amino-acid chain; its full sequence is Ribose-5-phosphate isomerase A (224 aa).

Residues 33–36 (TGST), 86–89 (DGAD), and 99–102 (KGGG) each bind substrate. E108 serves as the catalytic Proton acceptor. Substrate is bound at residue K126.

It belongs to the ribose 5-phosphate isomerase family. As to quaternary structure, homodimer.

It carries out the reaction aldehydo-D-ribose 5-phosphate = D-ribulose 5-phosphate. It functions in the pathway carbohydrate degradation; pentose phosphate pathway; D-ribose 5-phosphate from D-ribulose 5-phosphate (non-oxidative stage): step 1/1. Catalyzes the reversible conversion of ribose-5-phosphate to ribulose 5-phosphate. The sequence is that of Ribose-5-phosphate isomerase A from Bordetella avium (strain 197N).